The sequence spans 731 residues: MDRREDALLQALQTNASETERWEAFKRDNESTIRNLDKFAKNLSVEVMVPIGRKALMPGELIHTNELLVGHYEGYFSACSSHKAKEICQYRLKLAEEQLKKLAVENDLWQKKLHTPFAEGAVPSGDQVEIVEDFNEESHNKWLAEHRKRMRQQKQKERLEREAEPVKKDNEVLRKLEEREMMEELGLDPDNIDEDQLHDMLNQEPLKSTNESSPKSLTQEEEDELWKKLEAEEQNEADELSSEAEESLKTTDNLVRQLMSGETETPSSKKRTAGTNRNVEIQDPISEDDGDDDDEGDQEEEVRTIREQMSLLPNEDREPFLRAQLHVLKAKMRKIQKVNFISDELIHLMNVVVMLEDDLQDLVFEQELEASEEEEEVVENNHLPDEPSKELSTVSESSTNKRRISFALDDEKLEFRREETVAEMLPNAKKNSRDIIKLNAPLKPAGDPQPASIKTKRQTTQDILQKVERNIEFVKENQSVQDFDLLNRIMEESTGLINTLHISFTHSGAIPSPSSDQSDGIPGKPSDFYVRYEKDRARPNDSFPIYVNGFEGEEHVKVPIMSEAARGSAYEDPRSQFSKPNSSEICFTHSGSITPTSNDQSDDIPGNPFDFYEKYEKDRAKFSKSNSSEGDATDPESATKSILRNKSAVDLEPHNVNQQPKKGRKVRNQKKKERTLDDDLRDMSAYQKVMHDLVEKEPTAPEPLPPGKFIDSHAPKKRVSRFKEQRALNKT.

2 coiled-coil regions span residues 91–115 (RLKL…KLHT) and 143–176 (LAEH…LRKL). Residues 205–217 (PLKSTNESSPKSL) show a composition bias toward polar residues. 3 disordered regions span residues 205–224 (PLKS…EEDE), 259–302 (MSGE…EEEV), and 370–396 (ASEE…TVSE). The stretch at 220–258 (EEEDELWKKLEAEEQNEADELSSEAEESLKTTDNLVRQL) forms a coiled coil. Acidic residues predominate over residues 285–300 (ISEDDGDDDDEGDQEE). Coiled-coil stretches lie at residues 357 to 379 (DDLQ…EVVE) and 452 to 477 (SIKT…VKEN). Polar residues-rich tracts occupy residues 508-518 (GAIPSPSSDQS) and 575-599 (SQFS…TSND). Disordered regions lie at residues 508-527 (GAIP…KPSD), 567-682 (GSAY…DLRD), and 694-731 (VEKE…LNKT). The segment covering 611–621 (FYEKYEKDRAK) has biased composition (basic and acidic residues). The segment covering 623–644 (SKSNSSEGDATDPESATKSILR) has biased composition (polar residues). Residues 661-673 (KKGRKVRNQKKKE) are compositionally biased toward basic residues. The span at 721–731 (RFKEQRALNKT) shows a compositional bias: basic and acidic residues.

Belongs to the RNA polymerase II subunit 5-mediating protein family. Interacts with serine/threonine-protein phosphatases flw/PP1beta9C and Pp1-87B with higher affinity for Pp1-87B.

The protein resides in the cytoplasm. Its subcellular location is the chromosome. It is found in the nucleus. Functionally, inhibits the activity of serine/threonine-protein phosphatases flw/PP1beta9C and Pp1-87B. Required for germ line cell viability and differentiation, normal transcriptional activity and maintenance of DNA integrity. The polypeptide is Unconventional prefoldin RPB5 interactor-like protein (Drosophila melanogaster (Fruit fly)).